The following is a 224-amino-acid chain: MGYSKNIASGMFAMLLLASAVLSSNPHPLQDFCVADLDGKAVSVNGHMCKPMSEAGDDFLFSSKLAKAGNTSTPNGSAVTDLNVAEWPGTNTLGVSMNRVDFAPGGTNPPHIHPRATEIGIVMKGELLVGILGSLDSGNKLYSRVVRAGETFLIPRGLMHFQFNVGKTEASMVVFFNSQSPSVVFVPLTLFGSNPPIPKPVLTKALRVEAGVVELLKSKFAGGS.

Positions 1-23 (MGYSKNIASGMFAMLLLASAVLS) are cleaved as a signal peptide. A disulfide bridge links C33 with C49. Residues 63–214 (SKLAKAGNTS…ALRVEAGVVE (152 aa)) form the Cupin type-1 domain. N-linked (GlcNAc...) asparagine glycans are attached at residues N70 and N75. Residues H111, H113, E118, and H160 each coordinate Mn(2+).

Belongs to the germin family. Oligomer (believed to be a pentamer but probably hexamer).

The protein resides in the secreted. The protein localises to the extracellular space. It is found in the apoplast. It localises to the cytoplasm. Its subcellular location is the cell wall. It carries out the reaction oxalate + O2 + 2 H(+) = H2O2 + 2 CO2. Produces developmental and stress-related release of hydrogen peroxide in the apoplast. May play an important role in several aspects of plant growth and defense mechanisms. The chain is Oxalate oxidase GF-3.8 from Triticum aestivum (Wheat).